The sequence spans 203 residues: ATP-dependent Clp protease proteolytic subunit 2 (203 aa).

The Nucleophile role is filled by S101. H126 is a catalytic residue.

This sequence belongs to the peptidase S14 family. As to quaternary structure, fourteen ClpP subunits assemble into 2 heptameric rings which stack back to back to give a disk-like structure with a central cavity, resembling the structure of eukaryotic proteasomes.

Its subcellular location is the cytoplasm. The catalysed reaction is Hydrolysis of proteins to small peptides in the presence of ATP and magnesium. alpha-casein is the usual test substrate. In the absence of ATP, only oligopeptides shorter than five residues are hydrolyzed (such as succinyl-Leu-Tyr-|-NHMec, and Leu-Tyr-Leu-|-Tyr-Trp, in which cleavage of the -Tyr-|-Leu- and -Tyr-|-Trp bonds also occurs).. Functionally, cleaves peptides in various proteins in a process that requires ATP hydrolysis. Has a chymotrypsin-like activity. Plays a major role in the degradation of misfolded proteins. The sequence is that of ATP-dependent Clp protease proteolytic subunit 2 from Prochlorococcus marinus (strain MIT 9312).